A 113-amino-acid chain; its full sequence is MDGRVQLMKALLAGPLRPAARRWRNPIPFPETFDGDTDRLPEFIVQTSSYMFVDENTFSNDALKVTFLITRLTGPALQWVIPYIRKESPLLNDYRGFLAEMKRVFGWEEDEDF.

This sequence belongs to the FAM127 family.

This is Retrotransposon Gag-like protein 8A from Homo sapiens (Human).